The sequence spans 411 residues: Acetylornithine aminotransferase (411 aa).

Residues 107-108 and F141 each bind pyridoxal 5'-phosphate; that span reads GT. R144 contributes to the N(2)-acetyl-L-ornithine binding site. 227 to 230 lines the pyridoxal 5'-phosphate pocket; sequence DEIQ. Position 256 is an N6-(pyridoxal phosphate)lysine (K256). T284 contacts N(2)-acetyl-L-ornithine. T285 contributes to the pyridoxal 5'-phosphate binding site.

Belongs to the class-III pyridoxal-phosphate-dependent aminotransferase family. ArgD subfamily. In terms of assembly, homodimer. Requires pyridoxal 5'-phosphate as cofactor.

The protein localises to the cytoplasm. The enzyme catalyses N(2)-acetyl-L-ornithine + 2-oxoglutarate = N-acetyl-L-glutamate 5-semialdehyde + L-glutamate. It participates in amino-acid biosynthesis; L-arginine biosynthesis; N(2)-acetyl-L-ornithine from L-glutamate: step 4/4. The chain is Acetylornithine aminotransferase from Xylella fastidiosa (strain 9a5c).